The primary structure comprises 523 residues: Probable methylmalonate-semialdehyde/malonate-semialdehyde dehydrogenase [acylating], mitochondrial (523 aa).

Residues 1–22 (MLSRLARVQPKCQQLAHFSTSK) constitute a mitochondrion transit peptide. 3 residues coordinate NAD(+): F175, K199, and E202. The Nucleophile role is filled by C307. Position 407 (E407) interacts with NAD(+).

Belongs to the aldehyde dehydrogenase family. In terms of assembly, homodimer.

Its subcellular location is the mitochondrion. It catalyses the reaction 2-methyl-3-oxopropanoate + NAD(+) + CoA + H2O = propanoyl-CoA + hydrogencarbonate + NADH + H(+). The enzyme catalyses 3-oxopropanoate + NAD(+) + CoA + H2O = hydrogencarbonate + acetyl-CoA + NADH + H(+). Its function is as follows. Probable malonate and methylmalonate semialdehyde dehydrogenase involved in the catabolism of valine, thymine, and compounds catabolized by way of beta-alanine, including uracil and cytidine. This is Probable methylmalonate-semialdehyde/malonate-semialdehyde dehydrogenase [acylating], mitochondrial (alh-8) from Caenorhabditis elegans.